Here is a 434-residue protein sequence, read N- to C-terminus: Chaperone SurA (434 aa).

The signal sequence occupies residues 1 to 22 (MKPSKHLIFALFALAISQPTMA). PpiC domains lie at 173-274 (DVEY…KIMD) and 283-383 (IEEV…QLEE).

Its subcellular location is the periplasm. It carries out the reaction [protein]-peptidylproline (omega=180) = [protein]-peptidylproline (omega=0). Its function is as follows. Chaperone involved in the correct folding and assembly of outer membrane proteins. Recognizes specific patterns of aromatic residues and the orientation of their side chains, which are found more frequently in integral outer membrane proteins. May act in both early periplasmic and late outer membrane-associated steps of protein maturation. This is Chaperone SurA from Shewanella oneidensis (strain ATCC 700550 / JCM 31522 / CIP 106686 / LMG 19005 / NCIMB 14063 / MR-1).